The primary structure comprises 750 residues: Photosystem I P700 chlorophyll a apoprotein A1 (750 aa).

A run of 8 helical transmembrane segments spans residues Val-70–Ala-93, Leu-156–His-179, Leu-195–Leu-219, Thr-291–Tyr-309, Trp-346–Tyr-369, Leu-385–Val-411, Ala-433–His-455, and Phe-531–Leu-549. Cys-573 and Cys-582 together coordinate [4Fe-4S] cluster. The next 2 membrane-spanning stretches (helical) occupy residues His-589–Trp-610 and Leu-664–Phe-686. His-675 contacts chlorophyll a'. Positions 683 and 691 each coordinate chlorophyll a. Phylloquinone is bound at residue Trp-692. The chain crosses the membrane as a helical span at residues Ala-724–Ala-744.

It belongs to the PsaA/PsaB family. In terms of assembly, the PsaA/B heterodimer binds the P700 chlorophyll special pair and subsequent electron acceptors. PSI consists of a core antenna complex that captures photons, and an electron transfer chain that converts photonic excitation into a charge separation. The eukaryotic PSI reaction center is composed of at least 11 subunits. It depends on P700 is a chlorophyll a/chlorophyll a' dimer, A0 is one or more chlorophyll a, A1 is one or both phylloquinones and FX is a shared 4Fe-4S iron-sulfur center. as a cofactor.

Its subcellular location is the plastid. It is found in the chloroplast thylakoid membrane. The catalysed reaction is reduced [plastocyanin] + hnu + oxidized [2Fe-2S]-[ferredoxin] = oxidized [plastocyanin] + reduced [2Fe-2S]-[ferredoxin]. PsaA and PsaB bind P700, the primary electron donor of photosystem I (PSI), as well as the electron acceptors A0, A1 and FX. PSI is a plastocyanin-ferredoxin oxidoreductase, converting photonic excitation into a charge separation, which transfers an electron from the donor P700 chlorophyll pair to the spectroscopically characterized acceptors A0, A1, FX, FA and FB in turn. Oxidized P700 is reduced on the lumenal side of the thylakoid membrane by plastocyanin. The polypeptide is Photosystem I P700 chlorophyll a apoprotein A1 (Helianthus annuus (Common sunflower)).